A 984-amino-acid polypeptide reads, in one-letter code: Lateral signaling target protein 2 homolog (984 aa).

Disordered regions lie at residues 308–462 (PLGS…DTDE), 508–527 (YGTT…PSTS), 539–642 (RLRL…SSLS), and 749–900 (DNVF…SPPA). Composition is skewed to low complexity over residues 326 to 356 (TTSS…TTST), 369 to 380 (NNHNSNSNSSTN), 387 to 404 (TLRS…TPTA), and 412 to 433 (PSHS…PADW). Acidic residues predominate over residues 434-462 (SDGDDEDEDDDDIEVDEEDLESSDDDTDE). Phosphoserine occurs at positions 544 and 545. Positions 571-611 (RESHSHRHHQRHHHHHHHRHSHQHQHRQPHPHRTTRSGRKR) are enriched in basic residues. The span at 630–642 (LASGDTSAASSLS) shows a compositional bias: low complexity. 2 stretches are compositionally biased toward polar residues: residues 760-779 (ATGQ…TIDL) and 789-806 (SGAT…SRSL). Position 805 is a phosphoserine (serine 805). 2 stretches are compositionally biased toward low complexity: residues 811–869 (AASS…PVSA) and 886–899 (PSSA…LSPP). The FYVE-type zinc-finger motif lies at 904-964 (DGKAPRCMAC…VCRDCYVREV (61 aa)). Cysteine 910, cysteine 913, cysteine 926, cysteine 929, cysteine 934, cysteine 937, cysteine 956, and cysteine 959 together coordinate Zn(2+).

Belongs to the lst-2 family.

Its function is as follows. Negative regulator of epidermal growth factor receptor (EGFR) signaling. This Drosophila yakuba (Fruit fly) protein is Lateral signaling target protein 2 homolog.